A 104-amino-acid chain; its full sequence is Small ribosomal subunit protein uS10 (104 aa).

Belongs to the universal ribosomal protein uS10 family. Part of the 30S ribosomal subunit.

In terms of biological role, involved in the binding of tRNA to the ribosomes. The chain is Small ribosomal subunit protein uS10 from Nitrosococcus oceani (strain ATCC 19707 / BCRC 17464 / JCM 30415 / NCIMB 11848 / C-107).